A 341-amino-acid polypeptide reads, in one-letter code: D-aspartate oxidase (341 aa).

8 residues coordinate FAD: aspartate 36, arginine 37, threonine 43, serine 44, methionine 50, glycine 307, isoleucine 311, and serine 312. The Microbody targeting signal motif lies at 339-341 (SKL).

It belongs to the DAMOX/DASOX family. As to quaternary structure, dimer or tetramer. Interacts with PEX5; the interaction is direct and required for localization of DDO to the peroxisome. The cofactor is FAD. In terms of tissue distribution, expressed in the small intestine (at protein level). Expressed in the ependymal cell layer of the telencephalic ventricles, hippocampus, thalamus, cerebellum, midbrain region, pons, olfactory bulbs, and cortex. Repressed in the testis. Expressed in the kidney, liver, stomach, pancreas, uterus, lactating breast, involuting mammary gland, brain, heart, lung, and skin. As to expression, expressed in kidney, liver, pancreas, and in the mammary gland regardless of lactation status.

The protein resides in the peroxisome matrix. It localises to the cytoplasm. Its subcellular location is the cytosol. The enzyme catalyses D-aspartate + O2 + H2O = oxaloacetate + H2O2 + NH4(+). It carries out the reaction D-glutamate + O2 + H2O = H2O2 + 2-oxoglutarate + NH4(+). With respect to regulation, inhibited by the benzodiazepine olanzapine; chronic systemic administration of the benzodiazepine increases levels of D-aspartate and L-glutamate in the prefrontal cortex. Efficiently inhibited by 5-aminonicotinic acid (5-AN) and 1,4-Dihydropyrido[2,3-b]pyrazine-2,3-dione (DPPD). Inhibited by aminooxyacetic acid, thiolactomycin, anthranilic acid, malonate, meso-tartrate and L-tartrate. Benzoate has no effect on activity. In terms of biological role, selectively catalyzes the oxidative deamination of acidic amino acids. Suppresses the level of D-aspartate in the brain, an amino acid that can act as an agonist for glutamate receptors. Protects the organism from the toxicity of D-amino acids. May also function in the intestine. Selectively catalyzes the oxidative deamination of acidic amino acids. Its function is as follows. Does not exhibit D-aspartate oxidase activity. In Mus musculus (Mouse), this protein is D-aspartate oxidase (Ddo).